The sequence spans 33 residues: Cytochrome b6-f complex subunit 8 (33 aa).

Residues 2–22 (LISLGWAALAATFTFSIAMVV) traverse the membrane as a helical segment.

This sequence belongs to the PetN family. As to quaternary structure, the 4 large subunits of the cytochrome b6-f complex are cytochrome b6, subunit IV (17 kDa polypeptide, PetD), cytochrome f and the Rieske protein, while the 4 small subunits are PetG, PetL, PetM and PetN. The complex functions as a dimer.

The protein localises to the cellular thylakoid membrane. Its function is as follows. Component of the cytochrome b6-f complex, which mediates electron transfer between photosystem II (PSII) and photosystem I (PSI), cyclic electron flow around PSI, and state transitions. In Synechococcus sp. (strain RCC307), this protein is Cytochrome b6-f complex subunit 8.